The following is a 105-amino-acid chain: uncharacterized protein (105 aa).

The disordered stretch occupies residues 1–27 (MQSPAMKRIKSSSHSRWDGSGSVNEMP).

The protein localises to the mitochondrion. This is an uncharacterized protein from Arabidopsis thaliana (Mouse-ear cress).